Reading from the N-terminus, the 186-residue chain is UPF0398 protein LCA_0919 (186 aa).

This sequence belongs to the UPF0398 family.

The polypeptide is UPF0398 protein LCA_0919 (Latilactobacillus sakei subsp. sakei (strain 23K) (Lactobacillus sakei subsp. sakei)).